Reading from the N-terminus, the 113-residue chain is MENIAFICLQSCTRGIYGCQFYSATLENYHNISFPIFLLQTTLFNHCISLNWSKAVFNRIKRRKYMMELKKHCYNYQVSRIGNRKKNGCFFLKMANNRVFSVKNSPRLLLFFI.

This is an uncharacterized protein from Saccharomyces cerevisiae (strain ATCC 204508 / S288c) (Baker's yeast).